A 673-amino-acid chain; its full sequence is Protein VirD3 (673 aa).

6 disordered regions span residues 36-73, 171-216, 229-409, 478-497, 520-552, and 585-673; these read VAGE…GRLG, SPVN…GTSV, ERDT…LRSS, RLNG…LEDF, EKGK…VTPL, and DSSR…GCGR. Composition is skewed to polar residues over residues 171–183, 193–216, 234–246, and 268–277; these read SPVN…SNWQ, VQPS…GTSV, SETT…TISS, and QSLSVTVTTP. The segment covering 278–287 has biased composition (low complexity); that stretch reads NSNAEASSHS. The span at 288–303 shows a compositional bias: basic and acidic residues; the sequence is AHTETLDDVSSDRSSE. Composition is skewed to basic and acidic residues over residues 520 to 534 and 638 to 673; these read EKGK…DTRF and AAEH…GCGR.

This Agrobacterium fabrum (strain C58 / ATCC 33970) (Agrobacterium tumefaciens (strain C58)) protein is Protein VirD3 (virD3).